Reading from the N-terminus, the 1096-residue chain is Serine/threonine-protein kinase mig-15 (1096 aa).

The region spanning 21–288 is the Protein kinase domain; that stretch reads FELIEVVGNG…TGALLRHPFI (268 aa). ATP-binding positions include 27–35 and Lys-50; that span reads VGNGTYGQV. The active-site Proton acceptor is the Asp-151. Residues 293–315 are compositionally biased toward basic and acidic residues; the sequence is HEQTIRHSIKEHIDRNRRVKKDD. Disordered stretches follow at residues 293 to 351, 380 to 492, 517 to 545, and 574 to 664; these read HEQT…MIPM, LPQQ…QQSR, KMGG…EASI, and NGEG…DLLP. Over residues 316–328 the composition is skewed to acidic residues; the sequence is ADYEYSGSEDDEP. The span at 380–393 shows a compositional bias: low complexity; sequence LPQQPAPAPFQYQQ. Composition is skewed to basic and acidic residues over residues 397–408 and 453–472; these read VEPRRESSEVKL and NYEK…ERQA. Residues 532-541 are compositionally biased toward pro residues; it reads SPPPPAPPPR. Acidic residues predominate over residues 629–642; that stretch reads LDDDDSDSDNEEGN. The CNH domain occupies 778 to 1070; sequence SGEILCAALW…KFLCERNDKV (293 aa).

This sequence belongs to the protein kinase superfamily. STE Ser/Thr protein kinase family. STE20 subfamily.

The catalysed reaction is L-seryl-[protein] + ATP = O-phospho-L-seryl-[protein] + ADP + H(+). It carries out the reaction L-threonyl-[protein] + ATP = O-phospho-L-threonyl-[protein] + ADP + H(+). Functionally, involved in cell migration and signal transduction. Important in several developmental processes including epidermal development, Q neuroblast migrations and muscle arm targeting. Required with ina-1/pat-3 to stabilize the commissural axons growth cone along a precise direction and are required for the cell to respond appropriately when signaling in the growth cone must change. During gonad morphogenesis, involved in distal tip cell (DTC) migration from the dorsal side of the hermaphrodite body to the midbody to allow for formation of gonad arms. The polypeptide is Serine/threonine-protein kinase mig-15 (mig-15) (Caenorhabditis elegans).